The chain runs to 51 residues: Large ribosomal subunit protein eL39 (51 aa).

The protein belongs to the eukaryotic ribosomal protein eL39 family.

This Methanothermobacter thermautotrophicus (strain ATCC 29096 / DSM 1053 / JCM 10044 / NBRC 100330 / Delta H) (Methanobacterium thermoautotrophicum) protein is Large ribosomal subunit protein eL39 (rpl39e).